Consider the following 243-residue polypeptide: Orotidine 5'-phosphate decarboxylase (243 aa).

Substrate-binding positions include aspartate 18, lysine 39, 66–75 (DLKFHDIPAT), threonine 130, arginine 192, glutamine 201, glycine 221, and arginine 222. The active-site Proton donor is the lysine 68.

The protein belongs to the OMP decarboxylase family. Type 1 subfamily. In terms of assembly, homodimer.

It catalyses the reaction orotidine 5'-phosphate + H(+) = UMP + CO2. The protein operates within pyrimidine metabolism; UMP biosynthesis via de novo pathway; UMP from orotate: step 2/2. Functionally, catalyzes the decarboxylation of orotidine 5'-monophosphate (OMP) to uridine 5'-monophosphate (UMP). This chain is Orotidine 5'-phosphate decarboxylase, found in Synechococcus sp. (strain WH7803).